The sequence spans 397 residues: uncharacterized protein (397 aa).

4 helical membrane-spanning segments follow: residues 22 to 42, 270 to 290, 327 to 347, and 362 to 382; these read ILTMLGIIIGVGSVIVVVAVG, IMTTIIGSIAGISLLVGGIGV, VVLTLIGGLVGIGIGYGGAAL, and VVCGGVLFSMLIGVIFGMLPA.

It belongs to the ABC-4 integral membrane protein family. In terms of assembly, part of a complex composed of YknX, YknY and YknZ. The complex interacts with YknW.

It localises to the cell membrane. The protein localises to the membrane raft. In terms of biological role, part of an unusual four-component transporter, which is required for protection against the killing factor SdpC (sporulation-delaying protein). This is an uncharacterized protein from Bacillus subtilis (strain 168).